The primary structure comprises 1448 residues: Gag-Pol polyprotein (1448 aa).

A lipid anchor (N-myristoyl glycine; by host) is attached at glycine 2. The Nuclear export signal signature appears at 16-22; it reads LEKIRLR. Residues 26–32 carry the Nuclear localization signal motif; that stretch reads KKKYMLK. Over residues 218–227 the composition is skewed to low complexity; that stretch reads HPQQAPQQGQ. Residues 218–237 form a disordered region; that stretch reads HPQQAPQQGQLREPSGSDIA. CCHC-type zinc fingers lie at residues 391 to 408 and 412 to 429; these read IKCWNCGKEGHSARQCRA and QGCWKCGKMDHVMAKCPN. The segment at 440 to 461 is disordered; the sequence is LGKEAPQFPHGSSASGADANCS. The Peptidase A2 domain occupies 517–586; that stretch reads VEVLLDTGAD…TPINIFGRNL (70 aa). Aspartate 522 (for protease activity; shared with dimeric partner) is an active-site residue. The Reverse transcriptase domain maps to 640–830; the sequence is DGQLEEAPPT…PPFQWMGYEL (191 aa). The Mg(2+) site is built by aspartate 706, aspartate 781, and aspartate 782. Residues 823-831 form an RT 'primer grip' region; that stretch reads FQWMGYELW. Positions 993–1009 match the Tryptophan repeat motif motif; sequence WEQWWTDYWQVTWIPEW. Residues 1029–1152 enclose the RNase H type-1 domain; sequence IEGEETYYVD…IDHLVSQGIR (124 aa). Mg(2+)-binding residues include aspartate 1038, glutamate 1073, aspartate 1093, and aspartate 1144. The Integrase-type zinc finger occupies 1158–1199; that stretch reads EKIEPAQEEHSKYHSNIKELVFKFGLPRLVAKQIVDTCDKCH. Zn(2+) is bound by residues histidine 1167, histidine 1171, cysteine 1195, and cysteine 1198. One can recognise an Integrase catalytic domain in the interval 1209–1359; the sequence is VNSDLGTWQM…TPAERLINMI (151 aa). 2 residues coordinate Mg(2+): aspartate 1219 and aspartate 1271. The segment at residues 1378-1425 is a DNA-binding region (integrase-type); the sequence is FRVYYREGRDQLWKGPGELLWKGEGAVILKVGTDIKVVPRRKAKIIKD. Residues 1426-1448 are disordered; sequence YGGGKEMDSSSHMEDTGEAREVA.

Homotrimer. Interacts with gp41 (via C-terminus). In terms of assembly, homodimer. The active site consists of two apposed aspartic acid residues. As to quaternary structure, heterodimer of p66 RT and p51 RT (RT p66/p51). Heterodimerization of RT is essential for DNA polymerase activity. Despite the sequence identities, p66 RT and p51 RT have distinct folding. Homotetramer; may further associate as a homohexadecamer. Requires Mg(2+) as cofactor. Post-translationally, specific enzymatic cleavages by the viral protease yield mature proteins. The protease is released by autocatalytic cleavage. The polyprotein is cleaved during and after budding, this process is termed maturation. Proteolytic cleavage of p66 RT removes the RNase H domain to yield the p51 RT subunit. In terms of processing, capsid protein p24 is phosphorylated.

The protein resides in the virion. The protein localises to the host nucleus. It is found in the host cytoplasm. Its subcellular location is the host cell membrane. It carries out the reaction Specific for a P1 residue that is hydrophobic, and P1' variable, but often Pro.. It catalyses the reaction Endohydrolysis of RNA in RNA/DNA hybrids. Three different cleavage modes: 1. sequence-specific internal cleavage of RNA. Human immunodeficiency virus type 1 and Moloney murine leukemia virus enzymes prefer to cleave the RNA strand one nucleotide away from the RNA-DNA junction. 2. RNA 5'-end directed cleavage 13-19 nucleotides from the RNA end. 3. DNA 3'-end directed cleavage 15-20 nucleotides away from the primer terminus.. The enzyme catalyses 3'-end directed exonucleolytic cleavage of viral RNA-DNA hybrid.. The catalysed reaction is DNA(n) + a 2'-deoxyribonucleoside 5'-triphosphate = DNA(n+1) + diphosphate. The viral protease is inhibited by many synthetic protease inhibitors (PIs), such as amprenavir, atazanavir, indinavir, loprinavir, nelfinavir, ritonavir and saquinavir. RT can be inhibited either by nucleoside RT inhibitors (NRTIs) or by non nucleoside RT inhibitors (NNRTIs). NRTIs act as chain terminators, whereas NNRTIs inhibit DNA polymerization by binding a small hydrophobic pocket near the RT active site and inducing an allosteric change in this region. Classical NRTIs are abacavir, adefovir (PMEA), didanosine (ddI), lamivudine (3TC), stavudine (d4T), tenofovir (PMPA), zalcitabine (ddC), and zidovudine (AZT). Classical NNRTIs are atevirdine (BHAP U-87201E), delavirdine, efavirenz (DMP-266), emivirine (I-EBU), and nevirapine (BI-RG-587). The tritherapies used as a basic effective treatment of AIDS associate two NRTIs and one NNRTI. Use of protease inhibitors in tritherapy regimens permit more ambitious therapeutic strategies. Its function is as follows. Gag-Pol polyprotein and Gag polyprotein may regulate their own translation, by the binding genomic RNA in the 5'-UTR. At low concentration, Gag-Pol and Gag would promote translation, whereas at high concentration, the polyproteins encapsidate genomic RNA and then shut off translation. In terms of biological role, matrix protein p17 has two main functions: in infected cell, it targets Gag and Gag-pol polyproteins to the plasma membrane via a multipartite membrane-binding signal, that includes its myristointegration complex. The myristoylation signal and the NLS exert conflicting influences its subcellular localization. The key regulation of these motifs might be phosphorylation of a portion of MA molecules on the C-terminal tyrosine at the time of virus maturation, by virion-associated cellular tyrosine kinase. Implicated in the release from host cell mediated by Vpu. Capsid protein p24 forms the conical core that encapsulates the genomic RNA-nucleocapsid complex in the virion. The core is constituted by capsid protein hexamer subunits. The core is disassembled soon after virion entry. Interaction with host PPIA/CYPA protects the virus from restriction by host TRIM5-alpha and from an unknown antiviral activity in host cells. This capsid restriction by TRIM5 is one of the factors which restricts SIV to the simian species. Functionally, nucleocapsid protein p7 encapsulates and protects viral dimeric unspliced (genomic) RNA. Binds these RNAs through its zinc fingers. Facilitates rearangement of nucleic acid secondary structure during retrotranscription of genomic RNA. This capability is referred to as nucleic acid chaperone activity. Its function is as follows. The aspartyl protease mediates proteolytic cleavages of Gag and Gag-Pol polyproteins during or shortly after the release of the virion from the plasma membrane. Cleavages take place as an ordered, step-wise cascade to yield mature proteins. This process is called maturation. Displays maximal activity during the budding process just prior to particle release from the cell. Also cleaves Nef and Vif, probably concomitantly with viral structural proteins on maturation of virus particles. Hydrolyzes host EIF4GI and PABP1 in order to shut off the capped cellular mRNA translation. The resulting inhibition of cellular protein synthesis serves to ensure maximal viral gene expression and to evade host immune response. In terms of biological role, reverse transcriptase/ribonuclease H (RT) is a multifunctional enzyme that converts the viral dimeric RNA genome into dsDNA in the cytoplasm, shortly after virus entry into the cell. This enzyme displays a DNA polymerase activity that can copy either DNA or RNA templates, and a ribonuclease H (RNase H) activity that cleaves the RNA strand of RNA-DNA heteroduplexes in a partially processive 3' to 5' endonucleasic mode. Conversion of viral genomic RNA into dsDNA requires many steps. A tRNA binds to the primer-binding site (PBS) situated at the 5'-end of the viral RNA. RT uses the 3' end of the tRNA primer to perform a short round of RNA-dependent minus-strand DNA synthesis. The reading proceeds through the U5 region and ends after the repeated (R) region which is present at both ends of viral RNA. The portion of the RNA-DNA heteroduplex is digested by the RNase H, resulting in a ssDNA product attached to the tRNA primer. This ssDNA/tRNA hybridizes with the identical R region situated at the 3' end of viral RNA. This template exchange, known as minus-strand DNA strong stop transfer, can be either intra- or intermolecular. RT uses the 3' end of this newly synthesized short ssDNA to perform the RNA-dependent minus-strand DNA synthesis of the whole template. RNase H digests the RNA template except for two polypurine tracts (PPTs) situated at the 5'-end and near the center of the genome. It is not clear if both polymerase and RNase H activities are simultaneous. RNase H can probably proceed both in a polymerase-dependent (RNA cut into small fragments by the same RT performing DNA synthesis) and a polymerase-independent mode (cleavage of remaining RNA fragments by free RTs). Secondly, RT performs DNA-directed plus-strand DNA synthesis using the PPTs that have not been removed by RNase H as primers. PPTs and tRNA primers are then removed by RNase H. The 3' and 5' ssDNA PBS regions hybridize to form a circular dsDNA intermediate. Strand displacement synthesis by RT to the PBS and PPT ends produces a blunt ended, linear dsDNA copy of the viral genome that includes long terminal repeats (LTRs) at both ends. Integrase catalyzes viral DNA integration into the host chromosome, by performing a series of DNA cutting and joining reactions. This enzyme activity takes place after virion entry into a cell and reverse transcription of the RNA genome in dsDNA. The first step in the integration process is 3' processing. This step requires a complex comprising the viral genome, matrix protein, Vpr and integrase. This complex is called the pre-integration complex (PIC). The integrase protein removes 2 nucleotides from each 3' end of the viral DNA, leaving recessed CA OH's at the 3' ends. In the second step, the PIC enters cell nucleus. This process is mediated through integrase and Vpr proteins, and allows the virus to infect a non dividing cell. This ability to enter the nucleus is specific of lentiviruses, other retroviruses cannot and rely on cell division to access cell chromosomes. In the third step, termed strand transfer, the integrase protein joins the previously processed 3' ends to the 5' ends of strands of target cellular DNA at the site of integration. The 5'-ends are produced by integrase-catalyzed staggered cuts, 5 bp apart. A Y-shaped, gapped, recombination intermediate results, with the 5'-ends of the viral DNA strands and the 3' ends of target DNA strands remaining unjoined, flanking a gap of 5 bp. The last step is viral DNA integration into host chromosome. This involves host DNA repair synthesis in which the 5 bp gaps between the unjoined strands are filled in and then ligated. Since this process occurs at both cuts flanking the SIV genome, a 5 bp duplication of host DNA is produced at the ends of SIV integration. Alternatively, Integrase may catalyze the excision of viral DNA just after strand transfer, this is termed disintegration. This Cercopithecidae (Old World monkeys) protein is Gag-Pol polyprotein (gag-pol).